The sequence spans 409 residues: NADH-quinone oxidoreductase subunit D (409 aa).

This sequence belongs to the complex I 49 kDa subunit family. NDH-1 is composed of 14 different subunits. Subunits NuoB, C, D, E, F, and G constitute the peripheral sector of the complex.

Its subcellular location is the cell inner membrane. The catalysed reaction is a quinone + NADH + 5 H(+)(in) = a quinol + NAD(+) + 4 H(+)(out). NDH-1 shuttles electrons from NADH, via FMN and iron-sulfur (Fe-S) centers, to quinones in the respiratory chain. The immediate electron acceptor for the enzyme in this species is believed to be ubiquinone. Couples the redox reaction to proton translocation (for every two electrons transferred, four hydrogen ions are translocated across the cytoplasmic membrane), and thus conserves the redox energy in a proton gradient. This Helicobacter pylori (strain G27) protein is NADH-quinone oxidoreductase subunit D.